The sequence spans 2603 residues: Protein SABRE (2603 aa).

Positions 1-35 are cleaved as a signal peptide; it reads MAASPAKFFFGFLIVSIVLWMIFMLFAWMLSRVLG. N196 carries N-linked (GlcNAc...) asparagine glycosylation. The tract at residues 259–287 is disordered; the sequence is FPKSKQSSASLRSDEVRTSATAASSAKKP. Residues N331, N486, N597, N807, N867, N887, N1154, N1249, N1280, and N1408 are each glycosylated (N-linked (GlcNAc...) asparagine). The segment at 786-814 is disordered; sequence PESGCNKGISSVKDGGPSEKINQSNSVNK. Residues 1416 to 1436 form a disordered region; the sequence is FHQSPSSTEHPTDVGTVYSSQ. Residues N1492 and N1659 are each glycosylated (N-linked (GlcNAc...) asparagine). Disordered stretches follow at residues 1656–1676 and 1717–1777; these read EFEN…DDDG and EPPK…DDIG. Residues 1731–1748 show a composition bias toward basic and acidic residues; that stretch reads KIHEENQKESCPETHQGE. Residues 1749-1766 show a composition bias toward polar residues; it reads MSRSSASPGRNLPSSPSH. A coiled-coil region spans residues 1995–2023; it reads VEEVELAKINLEEKERERKLLLDDIRKLS. N2333 is a glycosylation site (N-linked (GlcNAc...) asparagine). 3 disordered regions span residues 2339-2380, 2448-2479, and 2554-2603; these read EQQE…RPRK, GKKF…KPDQ, and IRRH…DFRE. Residues 2343-2380 show a composition bias toward basic and acidic residues; that stretch reads DFSKQKVKEIKPVKSGRSSHEEKKAGKSHEEKKSRPRK. N2467 is a glycosylation site (N-linked (GlcNAc...) asparagine). Over residues 2554–2565 the composition is skewed to basic residues; sequence IRRHTKKFRPRS. Residues 2566–2583 are compositionally biased toward polar residues; the sequence is QRGSTSQQRESLPSSPIE. A compositionally biased stretch (low complexity) spans 2586–2603; sequence PFESGYSSGSSPYEDFRE.

Belongs to the SABRE family. As to expression, highest levels in leaves, also expressed in leaves, flowers, and siliques, and, to a lower extent, in roots and stems.

The protein localises to the secreted. It is found in the golgi apparatus. Its function is as follows. May be involved in membrane trafficking. Required for cell expansion, especially in root cortex, probably by counteracting the action of ethylene in promoting cells radial expansion. Involved in female organ development. Antagonistically interacts with ethylene signaling to regulate plant responses to Pi starvation. This is Protein SABRE from Arabidopsis thaliana (Mouse-ear cress).